The following is a 385-amino-acid chain: Tryptophan--tRNA ligase (385 aa).

The 'HIGH' region motif lies at 89-98 (PSSKTMHIGH). The short motif at 268-272 (KMSAS) is the 'KMSKS' region element.

The protein belongs to the class-I aminoacyl-tRNA synthetase family. As to quaternary structure, homodimer.

The enzyme catalyses tRNA(Trp) + L-tryptophan + ATP = L-tryptophyl-tRNA(Trp) + AMP + diphosphate + H(+). The chain is Tryptophan--tRNA ligase from Encephalitozoon cuniculi (strain GB-M1) (Microsporidian parasite).